Reading from the N-terminus, the 281-residue chain is Pantothenate synthetase (281 aa).

30-37 contributes to the ATP binding site; it reads MGNLHQGH. Catalysis depends on His-37, which acts as the Proton donor. Gln-61 lines the (R)-pantoate pocket. Residue Gln-61 participates in beta-alanine binding. 148 to 151 is a binding site for ATP; that stretch reads GQKD. (R)-pantoate is bound at residue Gln-154. ATP-binding positions include Ala-177 and 185–188; that span reads LSSR.

The protein belongs to the pantothenate synthetase family. Homodimer.

Its subcellular location is the cytoplasm. The enzyme catalyses (R)-pantoate + beta-alanine + ATP = (R)-pantothenate + AMP + diphosphate + H(+). It participates in cofactor biosynthesis; (R)-pantothenate biosynthesis; (R)-pantothenate from (R)-pantoate and beta-alanine: step 1/1. Catalyzes the condensation of pantoate with beta-alanine in an ATP-dependent reaction via a pantoyl-adenylate intermediate. In Acinetobacter baylyi (strain ATCC 33305 / BD413 / ADP1), this protein is Pantothenate synthetase.